The chain runs to 142 residues: Large ribosomal subunit protein uL13 (142 aa).

Belongs to the universal ribosomal protein uL13 family. Part of the 50S ribosomal subunit.

In terms of biological role, this protein is one of the early assembly proteins of the 50S ribosomal subunit, although it is not seen to bind rRNA by itself. It is important during the early stages of 50S assembly. The chain is Large ribosomal subunit protein uL13 from Ruthia magnifica subsp. Calyptogena magnifica.